The following is a 545-amino-acid chain: Esterase-5C (545 aa).

Residues 1–19 form the signal peptide; the sequence is MLAARLIILLSFYWLSASA. A disulfide bridge links C84 with C103. N-linked (GlcNAc...) asparagine glycosylation is present at N113. Catalysis depends on S207, which acts as the Acyl-ester intermediate. A disulfide bond links C259 and C271. N421 carries N-linked (GlcNAc...) asparagine glycosylation. H467 functions as the Charge relay system in the catalytic mechanism. N507 carries N-linked (GlcNAc...) asparagine glycosylation. The cysteines at positions 515 and 536 are disulfide-linked.

It belongs to the type-B carboxylesterase/lipase family.

It localises to the secreted. It catalyses the reaction a carboxylic ester + H2O = an alcohol + a carboxylate + H(+). The sequence is that of Esterase-5C (Est-5C) from Drosophila pseudoobscura pseudoobscura (Fruit fly).